We begin with the raw amino-acid sequence, 397 residues long: Digeranylgeranylglycerophospholipid reductase (397 aa).

The FAD site is built by Ala-15, Glu-34, Cys-45, Gly-46, Gly-48, Arg-101, Ala-125, Glu-163, Asp-284, Gly-296, and Ile-297. Residues Lys-339 and Val-375 each contribute to the a 2,3-bis-O-(geranylgeranyl)-sn-glycerol 1-phospholipid site.

The protein belongs to the geranylgeranyl reductase family. DGGGPL reductase subfamily. It depends on FAD as a cofactor.

The enzyme catalyses 2,3-bis-O-(phytanyl)-sn-glycerol 1-phosphate + 8 NADP(+) = 2,3-bis-O-(geranylgeranyl)-sn-glycerol 1-phosphate + 8 NADPH + 8 H(+). It carries out the reaction 2,3-bis-O-(phytanyl)-sn-glycerol 1-phosphate + 8 NAD(+) = 2,3-bis-O-(geranylgeranyl)-sn-glycerol 1-phosphate + 8 NADH + 8 H(+). The catalysed reaction is a 2,3-bis-O-phytanyl-sn-glycerol 1-phospholipid + 8 A = a 2,3-bis-O-(geranylgeranyl)-sn-glycerol 1-phospholipid + 8 AH2. It catalyses the reaction CDP-2,3-bis-O-(geranylgeranyl)-sn-glycerol + 8 AH2 = CDP-2,3-bis-O-(phytanyl)-sn-glycerol + 8 A. The enzyme catalyses archaetidylserine + 8 AH2 = 2,3-bis-O-phytanyl-sn-glycero-3-phospho-L-serine + 8 A. The protein operates within membrane lipid metabolism; glycerophospholipid metabolism. Is involved in the reduction of 2,3-digeranylgeranylglycerophospholipids (unsaturated archaeols) into 2,3-diphytanylglycerophospholipids (saturated archaeols) in the biosynthesis of archaeal membrane lipids. Catalyzes the formation of archaetidic acid (2,3-di-O-phytanyl-sn-glyceryl phosphate) from 2,3-di-O-geranylgeranylglyceryl phosphate (DGGGP) via the hydrogenation of each double bond of the isoprenoid chains. Is also probably able to reduce double bonds of geranyl groups in CDP-2,3-bis-O-(geranylgeranyl)-sn-glycerol and archaetidylserine, thus acting at various stages in the biosynthesis of archaeal membrane lipids. The polypeptide is Digeranylgeranylglycerophospholipid reductase (Picrophilus torridus (strain ATCC 700027 / DSM 9790 / JCM 10055 / NBRC 100828 / KAW 2/3)).